Consider the following 169-residue polypeptide: S-ribosylhomocysteine lyase (169 aa).

The Fe cation site is built by His-54, His-58, and Cys-128.

Belongs to the LuxS family. Homodimer. Requires Fe cation as cofactor.

The enzyme catalyses S-(5-deoxy-D-ribos-5-yl)-L-homocysteine = (S)-4,5-dihydroxypentane-2,3-dione + L-homocysteine. Its function is as follows. Involved in the synthesis of autoinducer 2 (AI-2) which is secreted by bacteria and is used to communicate both the cell density and the metabolic potential of the environment. The regulation of gene expression in response to changes in cell density is called quorum sensing. Catalyzes the transformation of S-ribosylhomocysteine (RHC) to homocysteine (HC) and 4,5-dihydroxy-2,3-pentadione (DPD). The sequence is that of S-ribosylhomocysteine lyase from Shewanella loihica (strain ATCC BAA-1088 / PV-4).